A 145-amino-acid polypeptide reads, in one-letter code: Maximins 3/H11 type 3 (145 aa).

Residues 1–18 (MNFKYIVAVSFLIASAYA) form the signal peptide. 2 consecutive propeptides follow at residues 19–43 (RSVQNDEQSLSQRDVLEEEESLREI) and 75–122 (TAEE…TKKE). Ile144 is subject to Isoleucine amide.

It belongs to the bombinin family. As to expression, expressed by the skin glands.

It localises to the secreted. Maximin-3 shows antibacterial activity against both Gram-positive and Gram-negative bacteria. It also shows antimicrobial activity against the fungus C.albicans, but not against A.flavus nor P.uticale. It has little hemolytic activity. It possess a significant cytotoxicity against tumor cell lines. It possess a significant anti-HIV activity. It shows high spermicidal activity. Its function is as follows. Maximin-H11 shows antimicrobial activity against bacteria and against the fungus C.albicans. Shows strong hemolytic activity. This chain is Maximins 3/H11 type 3, found in Bombina maxima (Giant fire-bellied toad).